Here is a 171-residue protein sequence, read N- to C-terminus: NADH-quinone oxidoreductase subunit I 1 (171 aa).

4Fe-4S ferredoxin-type domains follow at residues leucine 41 to threonine 71 and glutamate 81 to aspartate 110. [4Fe-4S] cluster contacts are provided by cysteine 51, cysteine 54, cysteine 57, cysteine 61, cysteine 90, cysteine 93, cysteine 96, and cysteine 100.

Belongs to the complex I 23 kDa subunit family. In terms of assembly, NDH-1 is composed of 14 different subunits. Subunits NuoA, H, J, K, L, M, N constitute the membrane sector of the complex. [4Fe-4S] cluster is required as a cofactor.

The protein resides in the cell inner membrane. The enzyme catalyses a quinone + NADH + 5 H(+)(in) = a quinol + NAD(+) + 4 H(+)(out). Its function is as follows. NDH-1 shuttles electrons from NADH, via FMN and iron-sulfur (Fe-S) centers, to quinones in the respiratory chain. The immediate electron acceptor for the enzyme in this species is believed to be ubiquinone. Couples the redox reaction to proton translocation (for every two electrons transferred, four hydrogen ions are translocated across the cytoplasmic membrane), and thus conserves the redox energy in a proton gradient. The sequence is that of NADH-quinone oxidoreductase subunit I 1 from Nitrosospira multiformis (strain ATCC 25196 / NCIMB 11849 / C 71).